The following is a 352-amino-acid chain: ATP synthase subunit a 2 (352 aa).

The first 26 residues, 1-26 (MRKKAISRILALVVPVLLSLNSQAFA), serve as a signal peptide directing secretion. Helical transmembrane passes span 112 to 132 (VVMI…AGAS), 172 to 192 (FLPY…LGLI), 195 to 215 (GATA…TFVI), 232 to 252 (HLTA…EILG), 264 to 284 (LFAN…ISFI), 289 to 309 (IVAV…ELFV), and 310 to 330 (AFLQ…LATA).

The protein belongs to the ATPase A chain family. As to quaternary structure, F-type ATPases have 2 components, CF(1) - the catalytic core - and CF(0) - the membrane proton channel. CF(1) has five subunits: alpha(3), beta(3), gamma(1), delta(1), epsilon(1). CF(0) has four main subunits: a, b, b' and c.

It localises to the cell inner membrane. In terms of biological role, key component of the proton channel; it plays a direct role in the translocation of protons across the membrane. This chain is ATP synthase subunit a 2, found in Chlorobaculum tepidum (strain ATCC 49652 / DSM 12025 / NBRC 103806 / TLS) (Chlorobium tepidum).